A 441-amino-acid polypeptide reads, in one-letter code: Ribulose bisphosphate carboxylase large chain (441 aa).

K5 carries the post-translational modification N6,N6,N6-trimethyllysine. 2 residues coordinate substrate: N114 and T164. K166 serves as the catalytic Proton acceptor. Substrate is bound at residue K168. Residues K192, D194, and E195 each contribute to the Mg(2+) site. At K192 the chain carries N6-carboxylysine. The active-site Proton acceptor is the H285. Substrate is bound by residues R286, H318, and S370.

It belongs to the RuBisCO large chain family. Type I subfamily. In terms of assembly, heterohexadecamer of 8 large chains and 8 small chains; disulfide-linked. The disulfide link is formed within the large subunit homodimers. It depends on Mg(2+) as a cofactor. In terms of processing, the disulfide bond which can form in the large chain dimeric partners within the hexadecamer appears to be associated with oxidative stress and protein turnover.

It localises to the plastid. The protein localises to the chloroplast. The enzyme catalyses 2 (2R)-3-phosphoglycerate + 2 H(+) = D-ribulose 1,5-bisphosphate + CO2 + H2O. It carries out the reaction D-ribulose 1,5-bisphosphate + O2 = 2-phosphoglycolate + (2R)-3-phosphoglycerate + 2 H(+). In terms of biological role, ruBisCO catalyzes two reactions: the carboxylation of D-ribulose 1,5-bisphosphate, the primary event in carbon dioxide fixation, as well as the oxidative fragmentation of the pentose substrate in the photorespiration process. Both reactions occur simultaneously and in competition at the same active site. The polypeptide is Ribulose bisphosphate carboxylase large chain (Argyrochosma delicatula (Delicate cloak fern)).